The primary structure comprises 201 residues: Recombination protein RecR (201 aa).

The C4-type zinc-finger motif lies at 60 to 75; the sequence is CSVCGNIDTTDPCSIC. One can recognise a Toprim domain in the interval 83–178; the sequence is GTIIVVEDIS…KITRLAHGVP (96 aa).

It belongs to the RecR family.

In terms of biological role, may play a role in DNA repair. It seems to be involved in an RecBC-independent recombinational process of DNA repair. It may act with RecF and RecO. This is Recombination protein RecR from Bartonella bacilliformis (strain ATCC 35685 / KC583 / Herrer 020/F12,63).